A 569-amino-acid chain; its full sequence is Laccase-13 (569 aa).

The signal sequence occupies residues 1–21 (MEQLRPFFLLLAIFVASLVNA). Plastocyanin-like domains lie at 29 to 145 (VIQE…PPLS) and 157 to 308 (REIT…YKDA). N75 carries an N-linked (GlcNAc...) asparagine glycan. 4 residues coordinate Cu cation: H79, H81, H124, and H126. 6 N-linked (GlcNAc...) asparagine glycosylation sites follow: N186, N296, N330, N381, N391, and N432. The Plastocyanin-like 3 domain occupies 418–553 (DFPPTPPVTF…AMVFLVENGE (136 aa)). The Cu cation site is built by H470, H473, H475, H532, C533, H534, and H538.

This sequence belongs to the multicopper oxidase family. Cu cation serves as cofactor. As to expression, mostly expressed in roots. Also detected in leaves, stems and flowers but not in siliques.

Its subcellular location is the secreted. It localises to the extracellular space. It is found in the apoplast. It catalyses the reaction 4 hydroquinone + O2 = 4 benzosemiquinone + 2 H2O. Functionally, lignin degradation and detoxification of lignin-derived products. This Arabidopsis thaliana (Mouse-ear cress) protein is Laccase-13 (LAC13).